The chain runs to 103 residues: Pilin (103 aa).

The signal sequence occupies residues 1–30 (MYRFACRTLMLAACILATGVAGLGVGAQSA). Positions 61–76 (HDDFHRDSDGPDHSRD) are enriched in basic and acidic residues. The interval 61–103 (HDDFHRDSDGPDHSRDYPGPILEGPVLDDPGAAPPPPAAGGGA) is disordered. Positions 92 to 103 (AAPPPPAAGGGA) are enriched in pro residues.

Belongs to the mycobacterial pilin family. In terms of assembly, forms a homomer composed of subunits assembled in a large structure.

The protein resides in the fimbrium. Functionally, structural subunit of pili, which are thin, flexible, coiled-coil, aggregative fibers. Mediates adhesion to the extracellular matrix, an event that would facilitate direct interaction with the host epithelium during infection in the lung or other tissues. This is Pilin (mtp) from Mycobacterium bovis (strain ATCC BAA-935 / AF2122/97).